A 1377-amino-acid chain; its full sequence is DNA-directed RNA polymerase subunit beta (1377 aa).

The protein belongs to the RNA polymerase beta chain family. The RNAP catalytic core consists of 2 alpha, 1 beta, 1 beta' and 1 omega subunit. When a sigma factor is associated with the core the holoenzyme is formed, which can initiate transcription.

It catalyses the reaction RNA(n) + a ribonucleoside 5'-triphosphate = RNA(n+1) + diphosphate. Functionally, DNA-dependent RNA polymerase catalyzes the transcription of DNA into RNA using the four ribonucleoside triphosphates as substrates. The chain is DNA-directed RNA polymerase subunit beta from Brucella abortus (strain S19).